We begin with the raw amino-acid sequence, 78 residues long: Exodeoxyribonuclease 7 small subunit (78 aa).

Belongs to the XseB family. As to quaternary structure, heterooligomer composed of large and small subunits.

It is found in the cytoplasm. The enzyme catalyses Exonucleolytic cleavage in either 5'- to 3'- or 3'- to 5'-direction to yield nucleoside 5'-phosphates.. Functionally, bidirectionally degrades single-stranded DNA into large acid-insoluble oligonucleotides, which are then degraded further into small acid-soluble oligonucleotides. The polypeptide is Exodeoxyribonuclease 7 small subunit (Cutibacterium acnes (strain DSM 16379 / KPA171202) (Propionibacterium acnes)).